An 85-amino-acid chain; its full sequence is UPF0335 protein BH15140 (85 aa).

The protein belongs to the UPF0335 family.

The chain is UPF0335 protein BH15140 from Bartonella henselae (strain ATCC 49882 / DSM 28221 / CCUG 30454 / Houston 1) (Rochalimaea henselae).